A 671-amino-acid polypeptide reads, in one-letter code: DNA ligase (671 aa).

Residues 38 to 42, 87 to 88, and Glu-113 contribute to the NAD(+) site; these read DKEFD and SL. The active-site N6-AMP-lysine intermediate is the Lys-115. Arg-136, Glu-170, Lys-282, and Lys-306 together coordinate NAD(+). Zn(2+) is bound by residues Cys-396, Cys-399, Cys-414, and Cys-419. Residues 586-671 enclose the BRCT domain; sequence SDLQPFVGQS…LLKQEGIAID (86 aa).

The protein belongs to the NAD-dependent DNA ligase family. LigA subfamily. Mg(2+) serves as cofactor. Mn(2+) is required as a cofactor.

The enzyme catalyses NAD(+) + (deoxyribonucleotide)n-3'-hydroxyl + 5'-phospho-(deoxyribonucleotide)m = (deoxyribonucleotide)n+m + AMP + beta-nicotinamide D-nucleotide.. Functionally, DNA ligase that catalyzes the formation of phosphodiester linkages between 5'-phosphoryl and 3'-hydroxyl groups in double-stranded DNA using NAD as a coenzyme and as the energy source for the reaction. It is essential for DNA replication and repair of damaged DNA. This is DNA ligase from Leptospira biflexa serovar Patoc (strain Patoc 1 / Ames).